The chain runs to 267 residues: 4-hydroxy-2-oxo-heptane-1,7-dioate aldolase (267 aa).

H45 functions as the Proton acceptor in the catalytic mechanism. Position 147 (Q147) interacts with substrate. E149 is an a divalent metal cation binding site. Substrate-binding residues include A174 and D175. An a divalent metal cation-binding site is contributed by D175.

This sequence belongs to the HpcH/HpaI aldolase family. As to quaternary structure, homohexamer; trimer of dimers. A divalent metal cation serves as cofactor.

It catalyses the reaction 4-hydroxy-2-oxoheptanedioate = succinate semialdehyde + pyruvate. The protein operates within aromatic compound metabolism; 4-hydroxyphenylacetate degradation; pyruvate and succinate semialdehyde from 4-hydroxyphenylacetate: step 7/7. Functionally, catalyzes the reversible retro-aldol cleavage of 4-hydroxy-2-ketoheptane-1,7-dioate (HKHD) to pyruvate and succinic semialdehyde. This chain is 4-hydroxy-2-oxo-heptane-1,7-dioate aldolase, found in Shigella flexneri.